The chain runs to 388 residues: MIKNPKVLILTAHYGNGHVQVAKTLEQTFRQKGIKDVIVCDLFGESHPVITDITKYLYLKSYTIGKELYRLFYYGVEKIYDKKIASWYANFGRKRLKLLLQAEKPDIVINTFPIIAVPELKKQTGISIPVYNVLTDFCVHKIWIHREVDRYFVATDHVKKVMVDIGVPAEQIVETGIPIRSSFELKINPDIIYNKYQLCKNKKILLIVAGAHGVLGSVKELCQSFMSVPDLQVVVVCGKNEALKQDLVGVQETNPDALKVFGYVENIDELFRVTSCMITKPGGITLSEAAALQVPVILYKPVPGQENENAMYFERKGAAVVIRDDSEVFAKTEALLQDDMKLLQMKEAMKSIYRPEPADHIVDTILEENHVEPNHIPIKSPALAQSFT.

Belongs to the glycosyltransferase 28 family. UgtP subfamily.

It is found in the cell membrane. The catalysed reaction is a 1,2-diacyl-3-O-(beta-D-glucopyranosyl)-sn-glycerol + UDP-alpha-D-glucose = a 1,2-diacyl-3-O-(beta-D-Glc-(1-&gt;6)-beta-D-Glc)-sn-glycerol + UDP + H(+). It carries out the reaction a 1,2-diacyl-3-O-(beta-D-Glc-(1-&gt;6)-beta-D-Glc)-sn-glycerol + UDP-alpha-D-glucose = a 1,2-diacyl-3-O-(beta-D-Glc-(1-&gt;6)-beta-D-Glc-(1-&gt;6)-beta-D-Glc)-sn-glycerol + UDP + H(+). The enzyme catalyses a 1,2-diacyl-sn-glycerol + UDP-alpha-D-glucose = a 1,2-diacyl-3-O-(beta-D-glucopyranosyl)-sn-glycerol + UDP + H(+). It participates in glycolipid metabolism; diglucosyl-diacylglycerol biosynthesis. Processive glucosyltransferase involved in the biosynthesis of both the bilayer- and non-bilayer-forming membrane glucolipids. Is able to successively transfer up to three glucosyl residues to diacylglycerol (DAG), thereby catalyzing the formation of beta-monoglucosyl-DAG (3-O-(beta-D-glucopyranosyl)-1,2-diacyl-sn-glycerol), beta-diglucosyl-DAG (3-O-(beta-D-glucopyranosyl-beta-(1-&gt;6)-D-glucopyranosyl)-1,2-diacyl-sn-glycerol) and beta-triglucosyl-DAG (3-O-(beta-D-glucopyranosyl-beta-(1-&gt;6)-D-glucopyranosyl-beta-(1-&gt;6)-D-glucopyranosyl)-1,2-diacyl-sn-glycerol). Beta-diglucosyl-DAG is the predominant glycolipid found in Bacillales and is also used as a membrane anchor for lipoteichoic acid (LTA). The chain is Processive diacylglycerol beta-glucosyltransferase from Bacillus thuringiensis (strain Al Hakam).